The primary structure comprises 156 residues: Small ribosomal subunit protein uS7 (156 aa).

This sequence belongs to the universal ribosomal protein uS7 family. In terms of assembly, part of the 30S ribosomal subunit. Contacts proteins S9 and S11.

Functionally, one of the primary rRNA binding proteins, it binds directly to 16S rRNA where it nucleates assembly of the head domain of the 30S subunit. Is located at the subunit interface close to the decoding center, probably blocks exit of the E-site tRNA. The polypeptide is Small ribosomal subunit protein uS7 (Microcystis aeruginosa (strain NIES-843 / IAM M-2473)).